Reading from the N-terminus, the 310-residue chain is Antiviral protein II/III (310 aa).

A signal peptide spans 1 to 25; that stretch reads MKMKVLEVVGLAISIWLMLTPPASS. 2 disulfide bridges follow: Cys57–Cys284 and Cys106–Cys123. Tyr94 is an active-site residue. Active-site residues include Tyr142, Glu197, and Arg200.

Belongs to the ribosome-inactivating protein family. Type 1 RIP subfamily. PAP-II is expressed in early summer leaves (at protein level). PAP-III is expressed in late summer leaves (at protein level).

The enzyme catalyses Endohydrolysis of the N-glycosidic bond at one specific adenosine on the 28S rRNA.. In terms of biological role, possesses antiviral potency. Inhibits viral infection of plants (tobacco mosaic virus). Inhibits protein synthesis in both prokaryotes and eukaryotes. The sequence is that of Antiviral protein II/III (PAP2) from Phytolacca americana (American pokeweed).